Reading from the N-terminus, the 386-residue chain is Galactokinase (386 aa).

35–38 (EHTD) serves as a coordination point for substrate. 125–131 (GAGLSSS) serves as a coordination point for ATP. Mg(2+)-binding residues include Ser-131 and Glu-163. Asp-175 functions as the Proton acceptor in the catalytic mechanism. Tyr-224 is a binding site for substrate.

Belongs to the GHMP kinase family. GalK subfamily.

It localises to the cytoplasm. It carries out the reaction alpha-D-galactose + ATP = alpha-D-galactose 1-phosphate + ADP + H(+). It functions in the pathway carbohydrate metabolism; galactose metabolism. Functionally, catalyzes the transfer of the gamma-phosphate of ATP to D-galactose to form alpha-D-galactose-1-phosphate (Gal-1-P). The sequence is that of Galactokinase from Vibrio cholerae serotype O1 (strain ATCC 39315 / El Tor Inaba N16961).